The following is a 208-amino-acid chain: Heart- and neural crest derivatives-expressed protein 2 (208 aa).

Disordered stretches follow at residues 79-106 (AGAVGMGPRTVKRRPTANRKERRRTQSI) and 161-197 (EFKKTDAKEERRKKEMNDVLKSSGSSNDKKTKGRTGW). A compositionally biased stretch (basic residues) spans 88–103 (TVKRRPTANRKERRRT). A bHLH domain is found at 90–142 (KRRPTANRKERRRTQSINSAFAELRECIPNVPADTKLSKIKTLRLATSYIAYL). A compositionally biased stretch (basic and acidic residues) spans 161 to 178 (EFKKTDAKEERRKKEMND).

In terms of assembly, efficient DNA binding requires dimerization with another bHLH protein.

The protein resides in the nucleus. Essential for myocardial and pectoral fin differentiation, patterning and morphogenesis. This is Heart- and neural crest derivatives-expressed protein 2 (hand2) from Danio rerio (Zebrafish).